We begin with the raw amino-acid sequence, 276 residues long: Glyoxal reductase (276 aa).

Tyrosine 54 acts as the Proton donor in catalysis. A substrate-binding site is contributed by histidine 112. NADP(+) is bound at residue 190–242 (SPLMQGQLLDNEVLTQIAEKHNKSVAQVILRWDLQHGVVTIPKSIKEHRIIEN).

The protein belongs to the aldo/keto reductase family.

It catalyses the reaction (S)-lactaldehyde + NADP(+) = methylglyoxal + NADPH + H(+). Its function is as follows. Reduces glyoxal and methylglyoxal (2-oxopropanal). Is not involved in the vitamin B6 biosynthesis. This is Glyoxal reductase (yvgN) from Bacillus subtilis (strain 168).